A 396-amino-acid polypeptide reads, in one-letter code: MDILIRPGDSLWYFSDLFKIPLQLLLDSNRNINPQLLQVGQRIQIPGYVTTSYTITQGDSLWQIAQNKNLPLNAILLVNPEIQPSRLHIGQTIQVPQRLTWRLVNGQQNYDYSMMMNDIKKLQTAYPFLQGTPIGNSVLAQPIPEILIGNGSKRIHYKASFHANEWITTPIIMTFLNDYLLALTNQTTIRGLSMGPLYNQTTLSLVPMVNPDGVNLVINGPPANEALKNKLIAWNHNSQNFSGWKANINGVDLNDQFPAKWELENARNPQTPGPRDYGGEAPLTQPEAIAMADLTRSRNFAWVLAFHTQGRVIYWGFENLEPPESQTMVEEFSRVSGYEPIQSANSYAGYKDWFIQDWRRPGFTVELGSGTNPLPISEFDTIYQEALGIFLAGLYL.

2 LysM domains span residues 1 to 45 (MDIL…RIQI) and 51 to 95 (TSYT…TIQV). One can recognise a Peptidase M14 domain in the interval 108–394 (QNYDYSMMMN…EALGIFLAGL (287 aa)). Residues H162 and E165 each contribute to the Zn(2+) site. D255 serves as a coordination point for substrate. H307 provides a ligand contact to Zn(2+). Catalysis depends on Y347, which acts as the Proton donor. Catalysis depends on E366, which acts as the Proton donor/acceptor.

Belongs to the peptidase M14 family. The cofactor is Zn(2+).

It carries out the reaction Hydrolysis of gamma-D-glutamyl bonds to the L-terminus (position 7) of meso-diaminopimelic acid (meso-A2pm) in 7-(L-Ala-gamma-D-Glu)-meso-A2pm and 7-(L-Ala-gamma-D-Glu)-7-(D-Ala)-meso-A2pm. It is required that the D-terminal amino and carboxy groups of meso-A2pm are unsubstituted.. Its function is as follows. An endopeptidase which hydrolyzes the gamma-D-Glu-(L)meso-diaminopimelic acid bond of L-Ala-gamma-D-Glu-(L)meso-diaminopimelic acid and L-Ala-gamma-D-Glu-(L)meso-diaminopimelic acid(L)-D-Ala peptides. It is active on spore cortex peptidoglycan. This chain is Gamma-D-glutamyl-L-diamino acid endopeptidase 1, found in Lysinibacillus sphaericus (Bacillus sphaericus).